A 1003-amino-acid chain; its full sequence is DNA topoisomerase 3-alpha (1003 aa).

The region spanning Lys-35 to Ser-179 is the Toprim domain. Positions Asp-197 to Phe-617 constitute a Topo IA-type catalytic domain. Tyr-362 (O-(5'-phospho-DNA)-tyrosine intermediate) is an active-site residue. The tract at residues Gly-400–Leu-426 is disordered. Residues Cys-658 to Cys-685 form a C4-type zinc finger. Cys-815, Cys-817, Cys-840, and Cys-845 together coordinate Zn(2+). The GRF-type 1 zinc-finger motif lies at Cys-815–Ser-854. The tract at residues Ser-856–Ser-888 is disordered. The segment covering Pro-862 to Ser-888 has biased composition (low complexity). Positions 899, 901, 924, and 932 each coordinate Zn(2+). The segment at Cys-899–Asn-941 adopts a GRF-type 2 zinc-finger fold. Positions Ser-946–Gln-991 are disordered.

This sequence belongs to the type IA topoisomerase family. As to quaternary structure, binds ssDNA. Interacts (via N-terminal region) with BLM; the interaction is direct. Directly interacts with RMI1. Component of the RMI complex, containing at least TOP3A, RMI1 and RMI2. The RMI complex interacts with BLM. Requires Mg(2+) as cofactor. In terms of tissue distribution, highly expressed in testis.

Its subcellular location is the mitochondrion matrix. The catalysed reaction is ATP-independent breakage of single-stranded DNA, followed by passage and rejoining.. Releases the supercoiling and torsional tension of DNA introduced during the DNA replication and transcription by transiently cleaving and rejoining one strand of the DNA duplex. Introduces a single-strand break via transesterification at a target site in duplex DNA. The scissile phosphodiester is attacked by the catalytic tyrosine of the enzyme, resulting in the formation of a DNA-(5'-phosphotyrosyl)-enzyme intermediate and the expulsion of a 3'-OH DNA strand. The free DNA strand then undergoes passage around the unbroken strand thus removing DNA supercoils. Finally, in the religation step, the DNA 3'-OH attacks the covalent intermediate to expel the active-site tyrosine and restore the DNA phosphodiester backbone. As an essential component of the RMI complex it is involved in chromosome separation and the processing of homologous recombination intermediates to limit DNA crossover formation in cells. Has DNA decatenation activity. It is required for mtDNA decatenation and segregation after completion of replication, in a process that does not require BLM, RMI1 and RMI2. The protein is DNA topoisomerase 3-alpha (Top3a) of Mus musculus (Mouse).